A 196-amino-acid polypeptide reads, in one-letter code: Putative 3-methyladenine DNA glycosylase (196 aa).

It belongs to the DNA glycosylase MPG family.

The polypeptide is Putative 3-methyladenine DNA glycosylase (Chlorobium phaeovibrioides (strain DSM 265 / 1930) (Prosthecochloris vibrioformis (strain DSM 265))).